The chain runs to 524 residues: Glycoprotein (524 aa).

An N-terminal signal peptide occupies residues 1–19 (MVPQVLLFAPLLVFPLCFG). The Virion surface portion of the chain corresponds to 20 to 459 (KFPIYTIPDK…DLGLPKWGKY (440 aa)). 6 cysteine pairs are disulfide-bonded: Cys43-Cys302, Cys54-Cys226, Cys80-Cys113, Cys178-Cys188, Cys208-Cys247, and Cys242-Cys271. N-linked (GlcNAc...) asparagine; by host glycosylation is present at Asn56. Asn177 is a glycosylation site (N-linked (GlcNAc...) asparagine; by host). Asn338 carries N-linked (GlcNAc...) asparagine; by host glycosylation. A disulfide bond links Cys363 and Cys370. Residues 460 to 480 (VLMIAGALIALMLIIFLMTCC) traverse the membrane as a helical segment. The S-palmitoyl cysteine; by host moiety is linked to residue Cys480. Topologically, residues 481–524 (RRVNRPESTQSNLGGTGRNVSVPSQSGKVISSWESYKSGGETRL) are intravirion. The disordered stretch occupies residues 487–506 (ESTQSNLGGTGRNVSVPSQS).

The protein belongs to the lyssavirus glycoprotein family. Homotrimer. Interacts with matrix protein. Interacts with host TRFC. Interacts with host BST2; this interaction inhibits viral budding by tethering new virions to the cell surface. Interacts with ITGB1. Interacts with host GRM2. Glycosylated and palmitoylated by host. Glycosylation is crucial for glycoprotein export at the cell surface.

Its subcellular location is the virion membrane. Attaches the virus to host cellular receptor, inducing endocytosis of the virion by using different host proteins including TFRC, GRM2 and ITGB1. In the endosome, the acidic pH induces conformational changes in the glycoprotein trimer, which trigger fusion between virus and cell membrane. There is convincing in vitro evidence that the muscular form of the nicotinic acetylcholine receptor (nAChR), the neuronal cell adhesion molecule (NCAM), and the p75 neurotrophin receptor (p75NTR) bind glycoprotein and thereby facilitate rabies virus entry into cells. The chain is Glycoprotein (G) from Homo sapiens (Human).